We begin with the raw amino-acid sequence, 171 residues long: Nicotinamide-nucleotide adenylyltransferase (171 aa).

It belongs to the archaeal NMN adenylyltransferase family.

It is found in the cytoplasm. It catalyses the reaction beta-nicotinamide D-ribonucleotide + ATP + H(+) = diphosphate + NAD(+). Its pathway is cofactor biosynthesis; NAD(+) biosynthesis; NAD(+) from nicotinamide D-ribonucleotide: step 1/1. This chain is Nicotinamide-nucleotide adenylyltransferase, found in Ignicoccus hospitalis (strain KIN4/I / DSM 18386 / JCM 14125).